Here is a 156-residue protein sequence, read N- to C-terminus: Small ribosomal subunit protein uS7 (156 aa).

It belongs to the universal ribosomal protein uS7 family. Part of the 30S ribosomal subunit. Contacts proteins S9 and S11.

In terms of biological role, one of the primary rRNA binding proteins, it binds directly to 16S rRNA where it nucleates assembly of the head domain of the 30S subunit. Is located at the subunit interface close to the decoding center, probably blocks exit of the E-site tRNA. This chain is Small ribosomal subunit protein uS7, found in Halalkalibacterium halodurans (strain ATCC BAA-125 / DSM 18197 / FERM 7344 / JCM 9153 / C-125) (Bacillus halodurans).